We begin with the raw amino-acid sequence, 914 residues long: Protein translocase subunit SecA (914 aa).

Residues glutamine 87, 105–109, and aspartate 508 each bind ATP; that span reads GEGKT. Zn(2+) is bound by residues cysteine 898, cysteine 900, cysteine 909, and histidine 910.

Belongs to the SecA family. Monomer and homodimer. Part of the essential Sec protein translocation apparatus which comprises SecA, SecYEG and auxiliary proteins SecDF-YajC and YidC. Zn(2+) is required as a cofactor.

The protein resides in the cell inner membrane. It is found in the cytoplasm. It carries out the reaction ATP + H2O + cellular proteinSide 1 = ADP + phosphate + cellular proteinSide 2.. In terms of biological role, part of the Sec protein translocase complex. Interacts with the SecYEG preprotein conducting channel. Has a central role in coupling the hydrolysis of ATP to the transfer of proteins into and across the cell membrane, serving both as a receptor for the preprotein-SecB complex and as an ATP-driven molecular motor driving the stepwise translocation of polypeptide chains across the membrane. This is Protein translocase subunit SecA from Xylella fastidiosa (strain M12).